We begin with the raw amino-acid sequence, 247 residues long: Segregation and condensation protein A (247 aa).

It belongs to the ScpA family. In terms of assembly, component of a cohesin-like complex composed of ScpA, ScpB and the Smc homodimer, in which ScpA and ScpB bind to the head domain of Smc. The presence of the three proteins is required for the association of the complex with DNA.

Its subcellular location is the cytoplasm. Participates in chromosomal partition during cell division. May act via the formation of a condensin-like complex containing Smc and ScpB that pull DNA away from mid-cell into both cell halves. This chain is Segregation and condensation protein A, found in Lactobacillus johnsonii (strain CNCM I-12250 / La1 / NCC 533).